We begin with the raw amino-acid sequence, 198 residues long: dCTP deaminase (198 aa).

Residues 99–104 (RSSLGR), 125–127 (TLE), and Q144 each bind dCTP. The active-site Proton donor/acceptor is E127.

The protein belongs to the dCTP deaminase family. In terms of assembly, homotrimer.

The enzyme catalyses dCTP + H2O + H(+) = dUTP + NH4(+). Its pathway is pyrimidine metabolism; dUMP biosynthesis; dUMP from dCTP (dUTP route): step 1/2. Its function is as follows. Catalyzes the deamination of dCTP to dUTP. The polypeptide is dCTP deaminase (Rhodopirellula baltica (strain DSM 10527 / NCIMB 13988 / SH1)).